The following is a 947-amino-acid chain: DNA mismatch repair protein MutS 2 (947 aa).

The disordered stretch occupies residues isoleucine 623–aspartate 643. Residue glycine 659–serine 666 coordinates ATP. The disordered stretch occupies residues alanine 841 to glutamate 916.

It belongs to the DNA mismatch repair MutS family.

This protein is involved in the repair of mismatches in DNA. It is possible that it carries out the mismatch recognition step. This protein has a weak ATPase activity. The polypeptide is DNA mismatch repair protein MutS 2 (Haloarcula marismortui (strain ATCC 43049 / DSM 3752 / JCM 8966 / VKM B-1809) (Halobacterium marismortui)).